A 74-amino-acid chain; its full sequence is Antimicrobial peptide AcrAP2 (74 aa).

The first 22 residues, 1–22, serve as a signal peptide directing secretion; sequence MEIKYLLTVFLVLLIVSDHCQA. Lys-40 carries the lysine amide modification. A propeptide spanning residues 46-74 is cleaved from the precursor; the sequence is NLDGQIDRFRNFRKRDAELEELLSKLPIY.

The protein belongs to the non-disulfide-bridged peptide (NDBP) superfamily. Short antimicrobial peptide (group 4) family. Expressed by the venom gland.

The protein resides in the secreted. It is found in the target cell membrane. Has antimicrobial activity against the Gram-positive bacteria S.aureus (MIC=8 uM) and the yeast C.albicans (MIC=16 uM). Causes hemolysis on horse erythrocytes (64 uM for 100% hemolysis). Minimum bactericidal concentrations have also been tested against S.aureus and is four-fold higher (MBC=32 uM). This Androctonus crassicauda (Arabian fat-tailed scorpion) protein is Antimicrobial peptide AcrAP2.